A 189-amino-acid polypeptide reads, in one-letter code: UPF0301 protein CTLon_0458 (189 aa).

It belongs to the UPF0301 (AlgH) family.

This is UPF0301 protein CTLon_0458 from Chlamydia trachomatis serovar L2b (strain UCH-1/proctitis).